The chain runs to 108 residues: Kanamycin resistance protein (108 aa).

In terms of domain architecture, N-acetyltransferase spans 1–99; it reads SRTLLLERGR…PAVYMVQTRQ (99 aa).

This Rhizobium radiobacter (Agrobacterium tumefaciens) protein is Kanamycin resistance protein.